A 266-amino-acid chain; its full sequence is MNKDFCIKNKKFQSRLILGTGRYRSLLEAKQSIEASGCDIVTVAIRRINADNIGFIKSLIKLINWQKYWLLPNTAGCQTAEEAIRVANLGQEIAKQLGQVDNNFVKLEVIPANKYLFPDPIGTLKAAEHLVKQGFVVLPYINSDPILAKQLEDIGCSAVMPLASAIGSGQGLKNIDNIRIIVEASKVPVIVDAGIGVPSEATQVMEIGADAVLINTAVAQCKVPVAMANAMRLAVAAGYEAHSAGRIPIKNYARTSSPNFDRIGQI.

Lys-106 functions as the Schiff-base intermediate with DXP in the catalytic mechanism. 1-deoxy-D-xylulose 5-phosphate contacts are provided by residues Gly-167, 193-194, and 215-216; these read AG and NT.

Belongs to the ThiG family. In terms of assembly, homotetramer. Forms heterodimers with either ThiH or ThiS.

It localises to the plastid. The protein localises to the chloroplast. The enzyme catalyses [ThiS sulfur-carrier protein]-C-terminal-Gly-aminoethanethioate + 2-iminoacetate + 1-deoxy-D-xylulose 5-phosphate = [ThiS sulfur-carrier protein]-C-terminal Gly-Gly + 2-[(2R,5Z)-2-carboxy-4-methylthiazol-5(2H)-ylidene]ethyl phosphate + 2 H2O + H(+). It participates in cofactor biosynthesis; thiamine diphosphate biosynthesis. Functionally, catalyzes the rearrangement of 1-deoxy-D-xylulose 5-phosphate (DXP) to produce the thiazole phosphate moiety of thiamine. Sulfur is provided by the thiocarboxylate moiety of the carrier protein ThiS. In vitro, sulfur can be provided by H(2)S. The chain is Thiazole synthase from Cyanidium caldarium (Red alga).